We begin with the raw amino-acid sequence, 183 residues long: RNA 2',3'-cyclic phosphodiesterase (183 aa).

His-44 (proton donor) is an active-site residue. 2 consecutive short sequence motifs (HXTX) follow at residues 44–47 (HITL) and 130–133 (HMTL). The active-site Proton acceptor is His-130.

Belongs to the 2H phosphoesterase superfamily. ThpR family.

The catalysed reaction is a 3'-end 2',3'-cyclophospho-ribonucleotide-RNA + H2O = a 3'-end 2'-phospho-ribonucleotide-RNA + H(+). Hydrolyzes RNA 2',3'-cyclic phosphodiester to an RNA 2'-phosphomonoester. The sequence is that of RNA 2',3'-cyclic phosphodiesterase (ytlP) from Bacillus subtilis (strain 168).